The following is a 609-amino-acid chain: MPEILNHTLILEKIKNLGASPGCYLWKSKKGEVLYVGKAKNLDKRVRSYLKENHPDVKTKVLQREIFDLDWIATGTEKEALILEATLIKKHNPRFNVRLKDDKKYPYICVSLSEPYPMVYVTRKLKDNGDRYFGPYSDVKSTRETLDIILRIFPVRKTRQVLPLPRPRRPCLNFDMGRCLGPCQGNIPVEDYKVIIDQVIQFLEGRKESLVSDLNIKMSNASERLDFEKAARYRDMLQRIQNFREKQTVVSLEGGDEDVIGFARKQDEGQVILLEIRGGRLETKKSFPIQGVLDAENSEILGAFFRDYYLNASLVPPCIFIPADIQDEVIPVIDVLQEKTGFRPKIKFPKGGDKRSLLKIAEKNAELGLSERLLATHYRDQTASLKEIQEMFSLERLPHIIECYDISHFQGSQPVASGVMFVEGKPFKQGYRKYNIRGYEGINDPGMIHEVISRRLQRIINEEGVFPDLIVIDGGLTQLTKACEAAVEAGAEGIPMVGLAKKREEIFFPGENEPFIFDMNSPGMKLLRHLRDEAHRFGVSHHRSRRNKETMRSLIQEVPDIGFKRSKLLLQHFSGEKKIEEATKEELLLVPGIGENLAEKILKQLQKKE.

The region spanning 19 to 97 is the GIY-YIG domain; it reads ASPGCYLWKS…IKKHNPRFNV (79 aa). Positions 208 to 243 constitute a UVR domain; it reads ESLVSDLNIKMSNASERLDFEKAARYRDMLQRIQNF.

It belongs to the UvrC family. In terms of assembly, interacts with UvrB in an incision complex.

Its subcellular location is the cytoplasm. The UvrABC repair system catalyzes the recognition and processing of DNA lesions. UvrC both incises the 5' and 3' sides of the lesion. The N-terminal half is responsible for the 3' incision and the C-terminal half is responsible for the 5' incision. This is UvrABC system protein C from Leptospira interrogans serogroup Icterohaemorrhagiae serovar copenhageni (strain Fiocruz L1-130).